The primary structure comprises 670 residues: Beta-fructofuranosidase 1 (670 aa).

Residues 1 to 40 (MIPAVADPTTLDGGGARRPLLPETDPRGRAAAGAEQKRPP) form a disordered region. The Cytoplasmic portion of the chain corresponds to 1–44 (MIPAVADPTTLDGGGARRPLLPETDPRGRAAAGAEQKRPPATPT). Residues 1-112 (MIPAVADPTT…APLLGSGALQ (112 aa)) constitute a propeptide, removed in mature form. A helical; Signal-anchor for type II membrane protein transmembrane segment spans residues 45 to 65 (VLTAVVSAVLLLVLVAVTVLA). Residues 66–670 (SQHVDGQAGG…RPYPATTTSL (605 aa)) lie on the Lumenal side of the membrane. Substrate-binding positions include 136-139 (WMND), Gln155, and Trp163. Asp139 is an active-site residue. Asn165 is a glycosylation site (N-linked (GlcNAc...) asparagine). Substrate is bound by residues 198-199 (WS) and 263-264 (RD). Residue Asn275 is glycosylated (N-linked (GlcNAc...) asparagine). Positions 322 and 362 each coordinate substrate. N-linked (GlcNAc...) asparagine glycosylation is present at Asn518. The cysteines at positions 519 and 567 are disulfide-linked. Residues Asn595 and Asn639 are each glycosylated (N-linked (GlcNAc...) asparagine).

This sequence belongs to the glycosyl hydrolase 32 family. May be present in two forms, a 70 kDa monomer and a heterodimer of the 30 kDa and 38 kDa subunits. The ratio of the levels of the two forms within cells appears to be regulated developmentally.

Its subcellular location is the membrane. It is found in the vacuole lumen. The enzyme catalyses Hydrolysis of terminal non-reducing beta-D-fructofuranoside residues in beta-D-fructofuranosides.. The protein operates within glycan biosynthesis; sucrose metabolism. The chain is Beta-fructofuranosidase 1 (IVR1) from Zea mays (Maize).